The chain runs to 241 residues: Pyridoxine 5'-phosphate synthase (241 aa).

Asn-7 contributes to the 3-amino-2-oxopropyl phosphate binding site. 1-deoxy-D-xylulose 5-phosphate is bound at residue 9 to 10 (DH). Arg-18 contacts 3-amino-2-oxopropyl phosphate. His-43 serves as the catalytic Proton acceptor. The 1-deoxy-D-xylulose 5-phosphate site is built by Arg-45 and His-50. Glu-70 (proton acceptor) is an active-site residue. Thr-100 provides a ligand contact to 1-deoxy-D-xylulose 5-phosphate. The Proton donor role is filled by His-191. 3-amino-2-oxopropyl phosphate-binding positions include Gly-192 and 213 to 214 (GH).

Belongs to the PNP synthase family. As to quaternary structure, homooctamer; tetramer of dimers.

It localises to the cytoplasm. It carries out the reaction 3-amino-2-oxopropyl phosphate + 1-deoxy-D-xylulose 5-phosphate = pyridoxine 5'-phosphate + phosphate + 2 H2O + H(+). It functions in the pathway cofactor biosynthesis; pyridoxine 5'-phosphate biosynthesis; pyridoxine 5'-phosphate from D-erythrose 4-phosphate: step 5/5. Its function is as follows. Catalyzes the complicated ring closure reaction between the two acyclic compounds 1-deoxy-D-xylulose-5-phosphate (DXP) and 3-amino-2-oxopropyl phosphate (1-amino-acetone-3-phosphate or AAP) to form pyridoxine 5'-phosphate (PNP) and inorganic phosphate. The sequence is that of Pyridoxine 5'-phosphate synthase from Nitratidesulfovibrio vulgaris (strain ATCC 29579 / DSM 644 / CCUG 34227 / NCIMB 8303 / VKM B-1760 / Hildenborough) (Desulfovibrio vulgaris).